We begin with the raw amino-acid sequence, 589 residues long: Probable translation initiation factor IF-2 (589 aa).

Residues valine 3–arginine 224 enclose the tr-type G domain. A G1 region spans residues glycine 12–threonine 19. Glycine 12–threonine 19 contacts GTP. Residues methionine 37–histidine 41 are G2. The interval aspartate 78–glycine 81 is G3. GTP is bound by residues aspartate 78–histidine 82 and asparagine 132–aspartate 135. Residues asparagine 132–aspartate 135 form a G4 region. Positions serine 200–valine 202 are G5.

It belongs to the TRAFAC class translation factor GTPase superfamily. Classic translation factor GTPase family. IF-2 subfamily.

In terms of biological role, function in general translation initiation by promoting the binding of the formylmethionine-tRNA to ribosomes. Seems to function along with eIF-2. The sequence is that of Probable translation initiation factor IF-2 from Pyrobaculum neutrophilum (strain DSM 2338 / JCM 9278 / NBRC 100436 / V24Sta) (Thermoproteus neutrophilus).